The following is a 341-amino-acid chain: S-adenosylmethionine:tRNA ribosyltransferase-isomerase (341 aa).

Belongs to the QueA family. As to quaternary structure, monomer.

It is found in the cytoplasm. The catalysed reaction is 7-aminomethyl-7-carbaguanosine(34) in tRNA + S-adenosyl-L-methionine = epoxyqueuosine(34) in tRNA + adenine + L-methionine + 2 H(+). It functions in the pathway tRNA modification; tRNA-queuosine biosynthesis. Its function is as follows. Transfers and isomerizes the ribose moiety from AdoMet to the 7-aminomethyl group of 7-deazaguanine (preQ1-tRNA) to give epoxyqueuosine (oQ-tRNA). This Clostridium botulinum (strain Eklund 17B / Type B) protein is S-adenosylmethionine:tRNA ribosyltransferase-isomerase.